A 513-amino-acid polypeptide reads, in one-letter code: ATP synthase subunit alpha (513 aa).

ATP is bound at residue 169–176; that stretch reads GDRQIGKS.

The protein belongs to the ATPase alpha/beta chains family. In terms of assembly, F-type ATPases have 2 components, CF(1) - the catalytic core - and CF(0) - the membrane proton channel. CF(1) has five subunits: alpha(3), beta(3), gamma(1), delta(1), epsilon(1). CF(0) has three main subunits: a(1), b(2) and c(9-12). The alpha and beta chains form an alternating ring which encloses part of the gamma chain. CF(1) is attached to CF(0) by a central stalk formed by the gamma and epsilon chains, while a peripheral stalk is formed by the delta and b chains.

The protein localises to the cell inner membrane. It catalyses the reaction ATP + H2O + 4 H(+)(in) = ADP + phosphate + 5 H(+)(out). Its function is as follows. Produces ATP from ADP in the presence of a proton gradient across the membrane. The alpha chain is a regulatory subunit. In Colwellia psychrerythraea (strain 34H / ATCC BAA-681) (Vibrio psychroerythus), this protein is ATP synthase subunit alpha.